Here is a 352-residue protein sequence, read N- to C-terminus: Isoflavone-7-O-methyltransferase 6 (352 aa).

118-127 is a binding site for substrate; the sequence is VLDPTLSGSY. Positions 196, 219, 239, 240, and 253 each coordinate S-adenosyl-L-methionine. The Proton acceptor role is filled by H257.

This sequence belongs to the class I-like SAM-binding methyltransferase superfamily. Cation-independent O-methyltransferase family. COMT subfamily. As to quaternary structure, homodimer.

It catalyses the reaction a 7-hydroxyisoflavone + S-adenosyl-L-methionine = a 7-methoxyisoflavone + S-adenosyl-L-homocysteine + H(+). It functions in the pathway phytoalexin biosynthesis; medicarpin biosynthesis. Functionally, transfers a methyl group to 7-hydroxyls of the isoflavones daidzein, genistein and 6,7,4'-trihydroxyisoflavone. Can also methylate (+)6a-hydroxymaackiain with lower efficiency. This Medicago sativa (Alfalfa) protein is Isoflavone-7-O-methyltransferase 6.